Here is a 391-residue protein sequence, read N- to C-terminus: NADH-quinone oxidoreductase subunit D (391 aa).

This sequence belongs to the complex I 49 kDa subunit family. As to quaternary structure, NDH-1 is composed of 14 different subunits. Subunits NuoB, C, D, E, F, and G constitute the peripheral sector of the complex.

The protein resides in the cell inner membrane. The enzyme catalyses a quinone + NADH + 5 H(+)(in) = a quinol + NAD(+) + 4 H(+)(out). Functionally, NDH-1 shuttles electrons from NADH, via FMN and iron-sulfur (Fe-S) centers, to quinones in the respiratory chain. The immediate electron acceptor for the enzyme in this species is believed to be ubiquinone. Couples the redox reaction to proton translocation (for every two electrons transferred, four hydrogen ions are translocated across the cytoplasmic membrane), and thus conserves the redox energy in a proton gradient. In Rickettsia bellii (strain OSU 85-389), this protein is NADH-quinone oxidoreductase subunit D.